The sequence spans 303 residues: N-acetyl-D-glucosamine kinase (303 aa).

ATP-binding positions include 4–11 and 133–140; these read GFDIGGTK and GVGGGLIF. 4 residues coordinate Zn(2+): His157, Cys177, Cys179, and Cys184.

It belongs to the ROK (NagC/XylR) family. NagK subfamily.

It catalyses the reaction N-acetyl-D-glucosamine + ATP = N-acetyl-D-glucosamine 6-phosphate + ADP + H(+). The protein operates within cell wall biogenesis; peptidoglycan recycling. Functionally, catalyzes the phosphorylation of N-acetyl-D-glucosamine (GlcNAc) derived from cell-wall degradation, yielding GlcNAc-6-P. This is N-acetyl-D-glucosamine kinase from Escherichia fergusonii (strain ATCC 35469 / DSM 13698 / CCUG 18766 / IAM 14443 / JCM 21226 / LMG 7866 / NBRC 102419 / NCTC 12128 / CDC 0568-73).